A 249-amino-acid polypeptide reads, in one-letter code: Putative S-adenosyl-L-methionine-dependent methyltransferase Mkms_0592 (249 aa).

Residues Asp111 and 141–142 (DL) each bind S-adenosyl-L-methionine.

Belongs to the UPF0677 family.

Functionally, exhibits S-adenosyl-L-methionine-dependent methyltransferase activity. This is Putative S-adenosyl-L-methionine-dependent methyltransferase Mkms_0592 from Mycobacterium sp. (strain KMS).